A 91-amino-acid polypeptide reads, in one-letter code: Acyl carrier protein (91 aa).

Residues 6 to 81 (EEIIAELGQI…DIVAYIQKLE (76 aa)) form the Carrier domain. O-(pantetheine 4'-phosphoryl)serine is present on Ser41.

The protein belongs to the acyl carrier protein (ACP) family. Post-translationally, 4'-phosphopantetheine is transferred from CoA to a specific serine of apo-ACP by AcpS. This modification is essential for activity because fatty acids are bound in thioester linkage to the sulfhydryl of the prosthetic group.

It is found in the cytoplasm. It functions in the pathway lipid metabolism; fatty acid biosynthesis. In terms of biological role, carrier of the growing fatty acid chain in fatty acid biosynthesis. In Rhodococcus erythropolis (strain PR4 / NBRC 100887), this protein is Acyl carrier protein.